A 396-amino-acid polypeptide reads, in one-letter code: Apurinic-apyrimidinic endonuclease (396 aa).

Positions 31-41 are enriched in basic residues; that stretch reads KGRGKIQKHIQ. Positions 31–100 are disordered; that stretch reads KGRGKIQKHI…TSGETIAQKK (70 aa). Over residues 55–70 the composition is skewed to polar residues; that stretch reads NQSPGTTVEETLTEEN. Over residues 72–85 the composition is skewed to basic and acidic residues; that stretch reads STDKEETSKLENKP. The Zn(2+) site is built by His-185, His-225, Glu-261, Asp-295, His-298, His-332, Asp-345, His-347, and Glu-377.

The protein belongs to the AP endonuclease 2 family. Zn(2+) serves as cofactor.

Its subcellular location is the nucleus. In Caenorhabditis elegans, this protein is Apurinic-apyrimidinic endonuclease (apn-1).